The primary structure comprises 476 residues: FAD-dependent monooxygenase ausM (476 aa).

Residues Glu41, Gly55, and Arg114 each contribute to the FAD site. Residue Tyr222 is part of the active site. The FAD site is built by Asp314 and Ala327. A helical transmembrane segment spans residues 447–467 (LGSTPIHMLTLLLPCLFYFMY).

The protein belongs to the paxM FAD-dependent monooxygenase family. It depends on FAD as a cofactor.

Its subcellular location is the membrane. It functions in the pathway secondary metabolite biosynthesis; terpenoid biosynthesis. Its function is as follows. FAD-dependent monooxygenase; part of the gene cluster A that mediates the biosynthesis of the fungal meroterpenoid acetoxydehydroaustin. The first step of the pathway is the synthesis of 3,5-dimethylorsellinic acid by the polyketide synthase ausA. 3,5-dimethylorsellinic acid is then prenylated by the polyprenyl transferase ausN. Further epoxidation by the FAD-dependent monooxygenase ausM and cyclization by the probable terpene cyclase ausL lead to the formation of protoaustinoid A. Protoaustinoid A is then oxidized to spiro-lactone preaustinoid A3 by the combined action of the FAD-binding monooxygenases ausB and ausC, and the dioxygenase ausE. Acid-catalyzed keto-rearrangement and ring contraction of the tetraketide portion of preaustinoid A3 by ausJ lead to the formation of preaustinoid A4. The aldo-keto reductase ausK, with the help of ausH, is involved in the next step by transforming preaustinoid A4 into isoaustinone which is in turn hydroxylated by the P450 monooxygenase ausI to form austinolide. The cytochrome P450 monooxygenase ausG then modifies austinolide to austinol. Austinol is further acetylated to austin by the O-acetyltransferase ausP, which spontaneously changes to dehydroaustin. The cytochrome P450 monooxygenase then converts dehydroaustin is into 7-dehydrodehydroaustin. The hydroxylation catalyzed by ausR permits the second O-acetyltransferase ausQ to add an additional acetyl group to the molecule, leading to the formation of acetoxydehydroaustin. Due to genetic rearrangements of the clusters and the subsequent loss of some enzymes, the end product of the Penicillium brasilianum austinoid biosynthesis clusters is acetoxydehydroaustin. The chain is FAD-dependent monooxygenase ausM from Penicillium brasilianum.